The primary structure comprises 346 residues: fMet-Leu-Phe receptor (346 aa).

N-linked (GlcNAc...) asparagine glycosylation is found at asparagine 1 and asparagine 7. Over 1-24 the chain is Extracellular; sequence NSSLPTNISGGTPAVSAGYLFLDI. The helical transmembrane segment at 25–47 threads the bilayer; sequence ITYLVFAVTFVLGVLGNGLVIWV. The Cytoplasmic portion of the chain corresponds to 48–58; sequence AGFRMRHTVTT. A helical membrane pass occupies residues 59–80; it reads ISYLNLAVADFCFTSTLPFLMV. At 81–97 the chain is on the extracellular side; sequence VKVMRGHWPFGWFLCKF. The cysteines at positions 95 and 173 are disulfide-linked. A helical transmembrane segment spans residues 98–118; it reads IFTIVDINLFGSVFLIALIAL. Topologically, residues 119-137 are cytoplasmic; the sequence is DRCVCVLHPVWTQNHRTVS. A helical transmembrane segment spans residues 138–159; that stretch reads LAKKVIIGPWVMALLLTLPVII. Residues 160 to 202 are Extracellular-facing; sequence RVTTVPGKTGTVACTFDFSPWTNDPVEKLKVTIAMLTVRGIIR. Residues 203–223 traverse the membrane as a helical segment; that stretch reads FIIGFSVPMSIVAVSYGLIAT. Residues 224–239 lie on the Cytoplasmic side of the membrane; sequence KIHKQGLIKSSRPLRV. A helical transmembrane segment spans residues 240–263; that stretch reads LSFVVAAFFLCWSPYQVVAFIATV. The Extracellular portion of the chain corresponds to 264 to 282; sequence RLRNILQGLSKELRIAVDA. The helical transmembrane segment at 283–302 threads the bilayer; sequence TSALAFFNSCLNPMLYVFMG. The Cytoplasmic portion of the chain corresponds to 303–346; the sequence is QDFRERLIHSLPTSLERALTEDSAQTSDTATNSTLPSAEVPLQA. A disordered region spans residues 321–346; that stretch reads LTEDSAQTSDTATNSTLPSAEVPLQA. The segment covering 324 to 338 has biased composition (polar residues); sequence DSAQTSDTATNSTLP.

This sequence belongs to the G-protein coupled receptor 1 family. Post-translationally, phosphorylated; which is necessary for desensitization.

It localises to the cell membrane. In terms of biological role, high affinity receptor for N-formyl-methionyl peptides (fMLP), which are powerful neutrophil chemotactic factors. Binding of fMLP to the receptor stimulates intracellular calcium mobilization and superoxide anion release. This response is mediated via a G-protein that activates a phosphatidylinositol-calcium second messenger system. Receptor for TAFA4, mediates its effects on chemoattracting macrophages, promoting phagocytosis and increasing ROS release. Receptor for cathepsin CTSG, leading to increased phagocyte chemotaxis. The chain is fMet-Leu-Phe receptor (FPR1) from Macaca mulatta (Rhesus macaque).